Consider the following 76-residue polypeptide: MKLTCVIVAVLFLTAWTFVTADDSGNGLENLFSKAHHEMKNPKDSKLNKRCLDGGEICGILFPSCCSGWCIVLVCA.

An N-terminal signal peptide occupies residues M1–A21. Positions D22–N48 are excised as a propeptide. Disulfide bonds link C51-C66, C58-C70, and C65-C75.

It belongs to the conotoxin O1 superfamily. As to expression, expressed by the venom duct.

Its subcellular location is the secreted. This chain is Conotoxin MaIr332, found in Conus marmoreus (Marble cone).